The following is a 318-amino-acid chain: Homoserine kinase (318 aa).

97-107 (PIGSGLGSSAC) contacts ATP.

It belongs to the GHMP kinase family. Homoserine kinase subfamily.

It localises to the cytoplasm. The catalysed reaction is L-homoserine + ATP = O-phospho-L-homoserine + ADP + H(+). Its pathway is amino-acid biosynthesis; L-threonine biosynthesis; L-threonine from L-aspartate: step 4/5. Its function is as follows. Catalyzes the ATP-dependent phosphorylation of L-homoserine to L-homoserine phosphate. The sequence is that of Homoserine kinase from Aliivibrio fischeri (strain ATCC 700601 / ES114) (Vibrio fischeri).